The following is a 249-amino-acid chain: Nodulation protein H (249 aa).

Its function is as follows. Required for the formation of sulfated nod factor. Proposed to transfer activated sulfate (PAPS) to a N-acetylglucosamine of the nod factor. This Rhizobium tropici protein is Nodulation protein H (nodH).